A 318-amino-acid polypeptide reads, in one-letter code: Putative HTH-type transcriptional regulatory protein MJ1164 (318 aa).

Positions 131-189 constitute an HTH cro/C1-type domain; sequence LKEVREAMGISVGKLAEVAGVSRKAIYKYETQMANPSVDVALKIEEFLDVPLVKGIDLF. Residues 142 to 161 constitute a DNA-binding region (H-T-H motif); that stretch reads VGKLAEVAGVSRKAIYKYET.

The sequence is that of Putative HTH-type transcriptional regulatory protein MJ1164 from Methanocaldococcus jannaschii (strain ATCC 43067 / DSM 2661 / JAL-1 / JCM 10045 / NBRC 100440) (Methanococcus jannaschii).